The following is a 162-amino-acid chain: Protein-export protein SecB 2 (162 aa).

Belongs to the SecB family. Homotetramer, a dimer of dimers. One homotetramer interacts with 1 SecA dimer.

The protein resides in the cytoplasm. Its function is as follows. One of the proteins required for the normal export of preproteins out of the cell cytoplasm. It is a molecular chaperone that binds to a subset of precursor proteins, maintaining them in a translocation-competent state. It also specifically binds to its receptor SecA. The protein is Protein-export protein SecB 2 of Polaromonas naphthalenivorans (strain CJ2).